The sequence spans 86 residues: OMEGA-stichotoxin-Shd4a (86 aa).

A signal peptide spans 1–23 (MASFRTLFACVVILCCVLWSSMA). Residues 24–36 (RYGEDMEVETEMN) constitute a propeptide that is removed on maturation. An EGF-like domain is found at 40 to 82 (EGVRCTGQHASSFCLNGGTCRHIASLGEYYCICPGDYTGHRCD). 3 disulfide bridges follow: Cys44–Cys59, Cys53–Cys70, and Cys72–Cys81.

The protein belongs to the EGF domain peptide family.

It is found in the secreted. It localises to the nematocyst. Its function is as follows. Has both toxic and EGF activity. Its EGF activity consists of rounding cells (morphological change) and inducing tyrosine phosphorylation of the EGFR in A431 cells, but with a lower potency that human EGF. This chain is OMEGA-stichotoxin-Shd4a, found in Stichodactyla haddoni (Saddle carpet anemone).